A 302-amino-acid chain; its full sequence is Olfactory receptor 51H1 (302 aa).

The Extracellular segment spans residues Met-1–Pro-27. Asn-5 carries an N-linked (GlcNAc...) asparagine glycan. The chain crosses the membrane as a helical span at residues Trp-28–Leu-48. At Ala-49–Ser-56 the chain is on the cytoplasmic side. Residues Leu-57–Met-77 traverse the membrane as a helical segment. Over Ser-78–Met-101 the chain is Extracellular. The cysteines at positions 99 and 191 are disulfide-linked. The chain crosses the membrane as a helical span at residues Gln-102 to Phe-122. The Cytoplasmic segment spans residues Asp-123 to Asp-141. Residues Val-142–Pro-162 form a helical membrane-spanning segment. The Extracellular segment spans residues Phe-163–Ser-198. The helical transmembrane segment at Leu-199–Ser-219 threads the bilayer. Topologically, residues Tyr-220–Thr-239 are cytoplasmic. The helical transmembrane segment at Leu-240–Ala-260 threads the bilayer. The Extracellular segment spans residues Ala-261 to His-276. The chain crosses the membrane as a helical span at residues Met-277–Val-297. Over Lys-298–Ile-302 the chain is Cytoplasmic.

Belongs to the G-protein coupled receptor 1 family.

The protein resides in the cell membrane. Functionally, odorant receptor. The chain is Olfactory receptor 51H1 (OR51H1) from Homo sapiens (Human).